The following is a 141-amino-acid chain: uncharacterized protein (141 aa).

Helical transmembrane passes span 7 to 24 (YRIP…FLSP), 39 to 56 (FLKF…HRGI), 69 to 91 (FYLI…ILGF), and 116 to 138 (FFIL…SSFI).

The protein resides in the cell membrane. This is an uncharacterized protein from Aquifex aeolicus (strain VF5).